We begin with the raw amino-acid sequence, 225 residues long: Holliday junction branch migration complex subunit RuvA (225 aa).

The domain I stretch occupies residues 1–71 (MISWISGELV…EDSDLLFGFS (71 aa)). The interval 72-150 (SKDQKNFFIE…NELKIQEEKS (79 aa)) is domain II. The tract at residues 151 to 161 (KDEFHIKDNKI) is flexible linker. Residues 161–225 (INKIVSDIEL…LDNDSSNIVR (65 aa)) are domain III.

The protein belongs to the RuvA family. Homotetramer. Forms an RuvA(8)-RuvB(12)-Holliday junction (HJ) complex. HJ DNA is sandwiched between 2 RuvA tetramers; dsDNA enters through RuvA and exits via RuvB. An RuvB hexamer assembles on each DNA strand where it exits the tetramer. Each RuvB hexamer is contacted by two RuvA subunits (via domain III) on 2 adjacent RuvB subunits; this complex drives branch migration. In the full resolvosome a probable DNA-RuvA(4)-RuvB(12)-RuvC(2) complex forms which resolves the HJ.

Its subcellular location is the cytoplasm. In terms of biological role, the RuvA-RuvB-RuvC complex processes Holliday junction (HJ) DNA during genetic recombination and DNA repair, while the RuvA-RuvB complex plays an important role in the rescue of blocked DNA replication forks via replication fork reversal (RFR). RuvA specifically binds to HJ cruciform DNA, conferring on it an open structure. The RuvB hexamer acts as an ATP-dependent pump, pulling dsDNA into and through the RuvAB complex. HJ branch migration allows RuvC to scan DNA until it finds its consensus sequence, where it cleaves and resolves the cruciform DNA. This is Holliday junction branch migration complex subunit RuvA from Prochlorococcus marinus (strain MIT 9312).